We begin with the raw amino-acid sequence, 45 residues long: Photosystem II reaction center protein K (45 aa).

Positions 1–8 (MELAMLLA) are excised as a propeptide. The chain crosses the membrane as a helical span at residues 24–44 (LPVIPVFFLLLAFVWQAAVGF).

It belongs to the PsbK family. As to quaternary structure, PSII is composed of 1 copy each of membrane proteins PsbA, PsbB, PsbC, PsbD, PsbE, PsbF, PsbH, PsbI, PsbJ, PsbK, PsbL, PsbM, PsbT, PsbX, PsbY, PsbZ, Psb30/Ycf12, peripheral proteins PsbO, CyanoQ (PsbQ), PsbU, PsbV and a large number of cofactors. It forms dimeric complexes.

It localises to the cellular thylakoid membrane. One of the components of the core complex of photosystem II (PSII). PSII is a light-driven water:plastoquinone oxidoreductase that uses light energy to abstract electrons from H(2)O, generating O(2) and a proton gradient subsequently used for ATP formation. It consists of a core antenna complex that captures photons, and an electron transfer chain that converts photonic excitation into a charge separation. This Trichodesmium erythraeum (strain IMS101) protein is Photosystem II reaction center protein K.